Consider the following 270-residue polypeptide: Interleukin-1 alpha (270 aa).

A propeptide spanning residues 1-114 is cleaved from the precursor; the sequence is MAKVPDLFED…HDLEETIQPR (114 aa). An N-linked (GlcNAc...) asparagine glycan is attached at Asn-46. Position 85 is an N6-acetyllysine (Lys-85). Positions 85-89 are nuclear localization signal (NLS); the sequence is KKRRL. Position 90 is a phosphoserine (Ser-90). A glycan (N-linked (GlcNAc...) asparagine) is linked at Asn-139.

Belongs to the IL-1 family. Monomer. Interacts with TMED10; the interaction mediates the translocation from the cytoplasm into the ERGIC (endoplasmic reticulum-Golgi intermediate compartment) and thereby secretion. Interacts with IL1R1. Interacts with S100A13; this interaction is the first step in the export of IL1A, followed by direct translocation of this complex across the plasma membrane. Post-translationally, acetylated within its nuclear localization sequence, which impacts subcellular localization. In terms of processing, proteolytic processed by CAPN1 in a calcium-dependent manner. Cleavage from 31 kDa precursor to 18 kDa biologically active molecules. Phosphorylated. Phosphorylation greatly enhances susceptibility to digestion and promotes the conversion of pre-IL1A alpha to the biologically active IL1A.

The protein localises to the nucleus. Its subcellular location is the cytoplasm. It is found in the secreted. Its function is as follows. Cytokine constitutively present intracellularly in nearly all resting non-hematopoietic cells that plays an important role in inflammation and bridges the innate and adaptive immune systems. After binding to its receptor IL1R1 together with its accessory protein IL1RAP, forms the high affinity interleukin-1 receptor complex. Signaling involves the recruitment of adapter molecules such as MYD88, IRAK1 or IRAK4. In turn, mediates the activation of NF-kappa-B and the three MAPK pathways p38, p42/p44 and JNK pathways. Within the cell, acts as an alarmin and cell death results in its liberation in the extracellular space after disruption of the cell membrane to induce inflammation and alert the host to injury or damage. In addition to its role as a danger signal, which occurs when the cytokine is passively released by cell necrosis, directly senses DNA damage and acts as signal for genotoxic stress without loss of cell integrity. This is Interleukin-1 alpha from Rattus norvegicus (Rat).